The sequence spans 274 residues: Thiazole synthase (274 aa).

Residue Lys115 is the Schiff-base intermediate with DXP of the active site. 1-deoxy-D-xylulose 5-phosphate is bound by residues Gly176, 202–203 (AG), and 224–225 (NS).

This sequence belongs to the ThiG family. Homotetramer. Forms heterodimers with either ThiH or ThiS.

The protein localises to the cytoplasm. The enzyme catalyses [ThiS sulfur-carrier protein]-C-terminal-Gly-aminoethanethioate + 2-iminoacetate + 1-deoxy-D-xylulose 5-phosphate = [ThiS sulfur-carrier protein]-C-terminal Gly-Gly + 2-[(2R,5Z)-2-carboxy-4-methylthiazol-5(2H)-ylidene]ethyl phosphate + 2 H2O + H(+). The protein operates within cofactor biosynthesis; thiamine diphosphate biosynthesis. Catalyzes the rearrangement of 1-deoxy-D-xylulose 5-phosphate (DXP) to produce the thiazole phosphate moiety of thiamine. Sulfur is provided by the thiocarboxylate moiety of the carrier protein ThiS. In vitro, sulfur can be provided by H(2)S. This is Thiazole synthase from Psychrobacter cryohalolentis (strain ATCC BAA-1226 / DSM 17306 / VKM B-2378 / K5).